The following is a 385-amino-acid chain: Succinate--CoA ligase [ADP-forming] subunit beta (385 aa).

The ATP-grasp domain occupies 9–243 (KEILSAYGIP…YSQLDTLEIN (235 aa)). Residues lysine 45, 52-54 (GRG), glutamate 98, valine 101, and glutamate 106 contribute to the ATP site. Residues asparagine 198 and aspartate 212 each contribute to the Mg(2+) site. Residues asparagine 263 and 320-322 (GIM) each bind substrate.

Belongs to the succinate/malate CoA ligase beta subunit family. Heterotetramer of two alpha and two beta subunits. Mg(2+) serves as cofactor.

The catalysed reaction is succinate + ATP + CoA = succinyl-CoA + ADP + phosphate. The enzyme catalyses GTP + succinate + CoA = succinyl-CoA + GDP + phosphate. The protein operates within carbohydrate metabolism; tricarboxylic acid cycle; succinate from succinyl-CoA (ligase route): step 1/1. In terms of biological role, succinyl-CoA synthetase functions in the citric acid cycle (TCA), coupling the hydrolysis of succinyl-CoA to the synthesis of either ATP or GTP and thus represents the only step of substrate-level phosphorylation in the TCA. The beta subunit provides nucleotide specificity of the enzyme and binds the substrate succinate, while the binding sites for coenzyme A and phosphate are found in the alpha subunit. This Geobacter sulfurreducens (strain ATCC 51573 / DSM 12127 / PCA) protein is Succinate--CoA ligase [ADP-forming] subunit beta.